The following is an 869-amino-acid chain: Leucine--tRNA ligase (869 aa).

The short motif at 51–61 (PYPSGRIHMGH) is the 'HIGH' region element. Positions 636–640 (KMSKS) match the 'KMSKS' region motif. Lys639 provides a ligand contact to ATP.

This sequence belongs to the class-I aminoacyl-tRNA synthetase family.

The protein resides in the cytoplasm. The enzyme catalyses tRNA(Leu) + L-leucine + ATP = L-leucyl-tRNA(Leu) + AMP + diphosphate. In Dinoroseobacter shibae (strain DSM 16493 / NCIMB 14021 / DFL 12), this protein is Leucine--tRNA ligase.